Here is a 217-residue protein sequence, read N- to C-terminus: MSGRQDASHAGRARARMVERLRAQGIQDEGALAAMMQVPRHLFVEEGLAYSAYDDTALPIGFQQTISQPYVVARMIELLRSGGRQLGRVLEIGAGCGYQAAVLSTLATEVYAVERIRPLLDKARANLRPLRLPNVRLKHADGTLGLPEAAPFESIIVAAAAGGVPNALKEQLAPGGRLIIPVGGGEQRLLLIERQGNVFRESGYEAVRFVPLLAGTE.

Residue Ser67 is part of the active site.

It belongs to the methyltransferase superfamily. L-isoaspartyl/D-aspartyl protein methyltransferase family.

The protein localises to the cytoplasm. The catalysed reaction is [protein]-L-isoaspartate + S-adenosyl-L-methionine = [protein]-L-isoaspartate alpha-methyl ester + S-adenosyl-L-homocysteine. In terms of biological role, catalyzes the methyl esterification of L-isoaspartyl residues in peptides and proteins that result from spontaneous decomposition of normal L-aspartyl and L-asparaginyl residues. It plays a role in the repair and/or degradation of damaged proteins. This Azoarcus sp. (strain BH72) protein is Protein-L-isoaspartate O-methyltransferase.